Consider the following 230-residue polypeptide: Sugar fermentation stimulation protein homolog (230 aa).

This sequence belongs to the SfsA family.

This is Sugar fermentation stimulation protein homolog from Pyrococcus furiosus (strain ATCC 43587 / DSM 3638 / JCM 8422 / Vc1).